The chain runs to 72 residues: Antimicrobial peptide MeuNaTxbeta-4 (72 aa).

Positions 1–5 (LIGVK) are cleaved as a signal peptide. An LCN-type CS-alpha/beta domain is found at 7–69 (EHGYLLDKYT…LWHYETNKCN (63 aa)). 4 disulfides stabilise this stretch: Cys18–Cys68, Cys22–Cys43, Cys29–Cys50, and Cys33–Cys52.

As to expression, expressed by the venom gland.

It localises to the secreted. Functionally, antimicrobial peptide with weak activity against both Gram-positive and -negative bacteria. Its antibiotic activity is potentiated by other antibacterial peptides such as Meucin-49. This is Antimicrobial peptide MeuNaTxbeta-4 from Mesobuthus eupeus (Lesser Asian scorpion).